The primary structure comprises 55 residues: Large ribosomal subunit protein uL30 (55 aa).

This sequence belongs to the universal ribosomal protein uL30 family. In terms of assembly, part of the 50S ribosomal subunit.

Functionally, binds the 5S and 23S rRNAs. The sequence is that of Large ribosomal subunit protein uL30 from Deinococcus radiodurans (strain ATCC 13939 / DSM 20539 / JCM 16871 / CCUG 27074 / LMG 4051 / NBRC 15346 / NCIMB 9279 / VKM B-1422 / R1).